Here is a 34-residue protein sequence, read N- to C-terminus: MPNLQTVAQLLALFVIITSGPAIIILIALRRGNL.

Residues 7–27 (VAQLLALFVIITSGPAIIILI) form a helical membrane-spanning segment.

The protein belongs to the Psb30/Ycf12 family. As to quaternary structure, PSII is composed of 1 copy each of membrane proteins PsbA, PsbB, PsbC, PsbD, PsbE, PsbF, PsbH, PsbI, PsbJ, PsbK, PsbL, PsbM, PsbT, PsbX, PsbY, PsbZ, Psb30/Ycf12, peripheral proteins of the oxygen-evolving complex and a large number of cofactors. It forms dimeric complexes.

Its subcellular location is the plastid. The protein resides in the chloroplast thylakoid membrane. Its function is as follows. A core subunit of photosystem II (PSII), probably helps stabilize the reaction center. This chain is Photosystem II reaction center protein Psb30, found in Guillardia theta (Cryptophyte).